The primary structure comprises 418 residues: STE20-related kinase adapter protein beta (418 aa).

The Protein kinase domain occupies 58–369; the sequence is YELQVEIGRG…ASSLLSHVFF (312 aa). ATP-binding positions include 64–72 and Lys-89; that span reads IGRGFDNLT.

This sequence belongs to the protein kinase superfamily. STE Ser/Thr protein kinase family. STE20 subfamily. As to quaternary structure, component of a trimeric complex composed of STK11/LKB1, STRAD (STRADA or STRADB) and CAB39/MO25 (CAB39/MO25alpha or CAB39L/MO25beta): the complex tethers STK11/LKB1 in the cytoplasm and stimulates its catalytic activity. Interacts with BIRC4/XIAP. These two proteins are likely to coexist in a complex with TAK1, TRAF6, TAB1 and TAB2.

The protein resides in the nucleus. It is found in the cytoplasm. Its function is as follows. Pseudokinase which, in complex with CAB39/MO25 (CAB39/MO25alpha or CAB39L/MO25beta), binds to and activates STK11/LKB1. Adopts a closed conformation typical of active protein kinases and binds STK11/LKB1 as a pseudosubstrate, promoting conformational change of STK11/LKB1 in an active conformation. This is STE20-related kinase adapter protein beta (Stradb) from Mus musculus (Mouse).